A 404-amino-acid polypeptide reads, in one-letter code: MSNFLPAEEQLALIQRGTHEIISEEDLLKKLKENRPLRIKAGFDPTAPDLHLGHTVLINKLKAFQDLGHEVTFLIGDYTAMIGDPTGKSATRPPLTREQVEANAKTYQEQVFKILDPNKTKVRFNSEWFNQRTAADLIQLASQQTVSRMLERDDFTKRYNNHQPIAIHEFLYPLVQGYDSIALEADVELGGTDQTFNLLMGRTLQGRYGQESQVCITVPILEGLDGVNKMSKSLGNYIGVFDAPGAMYQKVLSMPDTLIERYFELLSFKSLDEIQGLLDEMANGRNPQDLKKILALELVERFHDADAAANAHKGAGNIITEGEIPEGTPEVTISRGEFGGEIFIASIVRLAGLTKNAAQAKDAVSRGAVKVDWQVVDANFSVKENKTYLIQAGKKAIAQVTFTD.

A 'HIGH' region motif is present at residues 45–54 (PTAPDLHLGH). The 'KMSKS' region motif lies at 229 to 233 (KMSKS). K232 is a binding site for ATP. The 61-residue stretch at 342-402 (IFIASIVRLA…GKKAIAQVTF (61 aa)) folds into the S4 RNA-binding domain.

Belongs to the class-I aminoacyl-tRNA synthetase family. TyrS type 2 subfamily. As to quaternary structure, homodimer.

The protein localises to the cytoplasm. The enzyme catalyses tRNA(Tyr) + L-tyrosine + ATP = L-tyrosyl-tRNA(Tyr) + AMP + diphosphate + H(+). Functionally, catalyzes the attachment of tyrosine to tRNA(Tyr) in a two-step reaction: tyrosine is first activated by ATP to form Tyr-AMP and then transferred to the acceptor end of tRNA(Tyr). This is Tyrosine--tRNA ligase from Acinetobacter baylyi (strain ATCC 33305 / BD413 / ADP1).